Here is a 143-residue protein sequence, read N- to C-terminus: MAKKITGYIKLQVKAGEANPSPPVGPALGQRGVNIMEFCKAFNAQTQNVEKGLPLPVVITVYADRSFTFITKTPPASVLLKKALGLKSGSSKPNTDKVGTVTRAQLEEIAKMKMPDLTAADMDAAVRTIAGSATSMGLIVEGV.

Belongs to the universal ribosomal protein uL11 family. Part of the ribosomal stalk of the 50S ribosomal subunit. Interacts with L10 and the large rRNA to form the base of the stalk. L10 forms an elongated spine to which L12 dimers bind in a sequential fashion forming a multimeric L10(L12)X complex. Post-translationally, one or more lysine residues are methylated.

Functionally, forms part of the ribosomal stalk which helps the ribosome interact with GTP-bound translation factors. The protein is Large ribosomal subunit protein uL11 of Methylococcus capsulatus (strain ATCC 33009 / NCIMB 11132 / Bath).